Consider the following 522-residue polypeptide: Cytochrome P450 monooxygenase sirB (522 aa).

A helical transmembrane segment spans residues 22-42; the sequence is ASAILFCTLLTVFLFISQGTV. Asn-191 carries an N-linked (GlcNAc...) asparagine glycan. A helical membrane pass occupies residues 304-324; the sequence is VLHLSFAATGTVAILITHMIY. Position 462 (Cys-462) interacts with heme.

Belongs to the cytochrome P450 family. Requires heme as cofactor.

Its subcellular location is the membrane. Its pathway is mycotoxin biosynthesis. Its function is as follows. Cytochrome P450 monooxygenase; part of the gene cluster that mediates the biosynthesis of sirodesmin PL, an epipolythiodioxopiperazine (ETP) characterized by a disulfide bridged cyclic dipeptide and that acts as a phytotoxin which is involved in the blackleg didease of canola. SirD catalyzes the O-prenylation of L-tyrosine (L-Tyr) in the presence of dimethylallyl diphosphate (DMAPP) to yield 4-O-dimethylallyl-L-Tyr, and therefore represents probably the first pathway-specific enzyme in the biosynthesis of sirodesmin PL. 4-O-dimethylallyl-L-Tyr, then undergoes condensation with L-Ser in a reaction catalyzed by the non-ribosomal peptide synthase sirP to form the diketopiperazine (DKP) backbone. Further bishydroxylation of the DKP performed by the cytochrome P450 monooxygenase sirC leads to the production of the intermediate phomamide. This step is essential to form the reactive thiol group required for toxicity of sirodesmin PL. The next steps of sirodesmin biosynthesis are not well understood yet, but some predictions could be made from intermediate compounds identification. Phomamide is converted into phomalizarine via oxidation, probably by sirT. Further oxidation, methylation (by sirM or sirN) and reduction steps convert phomalizarine to deacetyl sirodesmin. Finally, acetyltransferase sirH probably acetylates deacetyl sirodesmin to produce sirodesmin PL. This Leptosphaeria maculans (Blackleg fungus) protein is Cytochrome P450 monooxygenase sirB.